The primary structure comprises 219 residues: Proteasome subunit beta type-9 (219 aa).

The propeptide at 1 to 20 (MLRAGAPTGDLPRAGEVHTG) is removed in mature form. Thr-21 acts as the Nucleophile in catalysis. Residues Lys-53 and Lys-109 each carry the N6-acetyllysine modification.

It belongs to the peptidase T1B family. In terms of assembly, the 26S proteasome consists of a 20S proteasome core and two 19S regulatory subunits. The 20S proteasome core is composed of 28 subunits that are arranged in four stacked rings, resulting in a barrel-shaped structure. The two end rings are each formed by seven alpha subunits, and the two central rings are each formed by seven beta subunits. The catalytic chamber with the active sites is on the inside of the barrel. Component of the immunoproteasome, where it displaces the equivalent housekeeping subunit PSMB6. Component of the spermatoproteasome, a form of the proteasome specifically found in testis. As to quaternary structure, (Microbial infection) Interacts with HIV-1 TAT protein. Autocleaved. The resulting N-terminal Thr residue of the mature subunit is responsible for the nucleophile proteolytic activity.

It is found in the cytoplasm. Its subcellular location is the nucleus. It carries out the reaction Cleavage of peptide bonds with very broad specificity.. Its function is as follows. The proteasome is a multicatalytic proteinase complex which is characterized by its ability to cleave peptides with Arg, Phe, Tyr, Leu, and Glu adjacent to the leaving group at neutral or slightly basic pH. The proteasome has an ATP-dependent proteolytic activity. This subunit is involved in antigen processing to generate class I binding peptides. Replacement of PSMB6 by PSMB9 increases the capacity of the immunoproteasome to cleave model peptides after hydrophobic and basic residues. The chain is Proteasome subunit beta type-9 (PSMB9) from Homo sapiens (Human).